Here is a 90-residue protein sequence, read N- to C-terminus: Probable Fe(2+)-trafficking protein (90 aa).

Belongs to the Fe(2+)-trafficking protein family. In terms of assembly, monomer.

Its function is as follows. Could be a mediator in iron transactions between iron acquisition and iron-requiring processes, such as synthesis and/or repair of Fe-S clusters in biosynthetic enzymes. The sequence is that of Probable Fe(2+)-trafficking protein from Pectobacterium carotovorum subsp. carotovorum (strain PC1).